The following is a 379-amino-acid chain: Chaperone protein DnaJ (379 aa).

The region spanning 5–71 (DYYEILGVSR…EKRAMYDRFG (67 aa)) is the J domain. The CR-type zinc-finger motif lies at 149–231 (GTTIPIEYDR…CGGSGRIRKR (83 aa)). 8 residues coordinate Zn(2+): C162, C165, C179, C182, C205, C208, C219, and C222. CXXCXGXG motif repeat units lie at residues 162 to 169 (CSHCNGEG), 179 to 186 (CPKCHGTG), 205 to 212 (CNQCGGTG), and 219 to 226 (CHVCGGSG).

Belongs to the DnaJ family. In terms of assembly, homodimer. Zn(2+) is required as a cofactor.

It is found in the cytoplasm. Functionally, participates actively in the response to hyperosmotic and heat shock by preventing the aggregation of stress-denatured proteins and by disaggregating proteins, also in an autonomous, DnaK-independent fashion. Unfolded proteins bind initially to DnaJ; upon interaction with the DnaJ-bound protein, DnaK hydrolyzes its bound ATP, resulting in the formation of a stable complex. GrpE releases ADP from DnaK; ATP binding to DnaK triggers the release of the substrate protein, thus completing the reaction cycle. Several rounds of ATP-dependent interactions between DnaJ, DnaK and GrpE are required for fully efficient folding. Also involved, together with DnaK and GrpE, in the DNA replication of plasmids through activation of initiation proteins. The polypeptide is Chaperone protein DnaJ (Thermosipho africanus (strain TCF52B)).